A 626-amino-acid chain; its full sequence is Elongation factor 4 (626 aa).

The tr-type G domain maps to 14-195 (SVIRNFCIIA…QIVMDVPAPH (182 aa)). GTP is bound by residues 26–31 (DHGKST) and 142–145 (NKID). The tract at residues 603-626 (LSTGEDSNDRDTKDKIRAAQKTEG) is disordered. Over residues 609-626 (SNDRDTKDKIRAAQKTEG) the composition is skewed to basic and acidic residues.

Belongs to the TRAFAC class translation factor GTPase superfamily. Classic translation factor GTPase family. LepA subfamily.

It localises to the cell membrane. It catalyses the reaction GTP + H2O = GDP + phosphate + H(+). Its function is as follows. Required for accurate and efficient protein synthesis under certain stress conditions. May act as a fidelity factor of the translation reaction, by catalyzing a one-codon backward translocation of tRNAs on improperly translocated ribosomes. Back-translocation proceeds from a post-translocation (POST) complex to a pre-translocation (PRE) complex, thus giving elongation factor G a second chance to translocate the tRNAs correctly. Binds to ribosomes in a GTP-dependent manner. The protein is Elongation factor 4 of Bifidobacterium longum subsp. infantis (strain ATCC 15697 / DSM 20088 / JCM 1222 / NCTC 11817 / S12).